We begin with the raw amino-acid sequence, 236 residues long: Ion-translocating oxidoreductase complex subunit E (236 aa).

6 consecutive transmembrane segments (helical) span residues 18–38, 39–59, 69–89, 92–112, 128–148, and 182–202; these read ALVQ…ATNA, LGLG…VSAL, IPIY…LINA, FGLY…CIVI, ALDG…LGAL, and PFLL…MLAF. A disordered region spans residues 217-236; it reads RSAVGQALRGAAPTDNHEQA.

It belongs to the NqrDE/RnfAE family. The complex is composed of six subunits: RnfA, RnfB, RnfC, RnfD, RnfE and RnfG.

It localises to the cell inner membrane. Functionally, part of a membrane-bound complex that couples electron transfer with translocation of ions across the membrane. In Edwardsiella ictaluri (strain 93-146), this protein is Ion-translocating oxidoreductase complex subunit E.